The chain runs to 960 residues: Valine--tRNA ligase (960 aa).

The 'HIGH' region signature appears at 42–52 (PNITGNLHMGH). A 'KMSKS' region motif is present at residues 553–557 (KMSKS). Position 556 (Lys556) interacts with ATP. Residues 879 to 950 (VLKAIDKEIE…LSQQLESLHD (72 aa)) are a coiled coil.

It belongs to the class-I aminoacyl-tRNA synthetase family. ValS type 1 subfamily. Monomer.

Its subcellular location is the cytoplasm. The enzyme catalyses tRNA(Val) + L-valine + ATP = L-valyl-tRNA(Val) + AMP + diphosphate. Catalyzes the attachment of valine to tRNA(Val). As ValRS can inadvertently accommodate and process structurally similar amino acids such as threonine, to avoid such errors, it has a 'posttransfer' editing activity that hydrolyzes mischarged Thr-tRNA(Val) in a tRNA-dependent manner. This is Valine--tRNA ligase from Buchnera aphidicola subsp. Schizaphis graminum (strain Sg).